The primary structure comprises 387 residues: uncharacterized protein (387 aa).

The protein resides in the mitochondrion. This is an uncharacterized protein from Paramecium tetraurelia.